A 591-amino-acid polypeptide reads, in one-letter code: V-type ATP synthase alpha chain (591 aa).

242-249 lines the ATP pocket; that stretch reads GPFGAGKT.

The protein belongs to the ATPase alpha/beta chains family.

It catalyses the reaction ATP + H2O + 4 H(+)(in) = ADP + phosphate + 5 H(+)(out). Its function is as follows. Produces ATP from ADP in the presence of a proton gradient across the membrane. The V-type alpha chain is a catalytic subunit. The polypeptide is V-type ATP synthase alpha chain (Chlamydia caviae (strain ATCC VR-813 / DSM 19441 / 03DC25 / GPIC) (Chlamydophila caviae)).